The following is a 270-amino-acid chain: Putative pyruvate, phosphate dikinase regulatory protein (270 aa).

151-158 (GVSRTSKT) contributes to the ADP binding site.

This sequence belongs to the pyruvate, phosphate/water dikinase regulatory protein family. PDRP subfamily.

It carries out the reaction N(tele)-phospho-L-histidyl/L-threonyl-[pyruvate, phosphate dikinase] + ADP = N(tele)-phospho-L-histidyl/O-phospho-L-threonyl-[pyruvate, phosphate dikinase] + AMP + H(+). The enzyme catalyses N(tele)-phospho-L-histidyl/O-phospho-L-threonyl-[pyruvate, phosphate dikinase] + phosphate + H(+) = N(tele)-phospho-L-histidyl/L-threonyl-[pyruvate, phosphate dikinase] + diphosphate. In terms of biological role, bifunctional serine/threonine kinase and phosphorylase involved in the regulation of the pyruvate, phosphate dikinase (PPDK) by catalyzing its phosphorylation/dephosphorylation. This chain is Putative pyruvate, phosphate dikinase regulatory protein, found in Ligilactobacillus salivarius (strain UCC118) (Lactobacillus salivarius).